The following is a 128-amino-acid chain: Large ribosomal subunit protein uL22 (128 aa).

The disordered stretch occupies residues 1-20; that stretch reads MANGHRSQIKRERNAVKDTR. Basic and acidic residues predominate over residues 9 to 20; sequence IKRERNAVKDTR.

Belongs to the universal ribosomal protein uL22 family. As to quaternary structure, part of the 50S ribosomal subunit.

This protein binds specifically to 23S rRNA; its binding is stimulated by other ribosomal proteins, e.g. L4, L17, and L20. It is important during the early stages of 50S assembly. It makes multiple contacts with different domains of the 23S rRNA in the assembled 50S subunit and ribosome. In terms of biological role, the globular domain of the protein is located near the polypeptide exit tunnel on the outside of the subunit, while an extended beta-hairpin is found that lines the wall of the exit tunnel in the center of the 70S ribosome. The sequence is that of Large ribosomal subunit protein uL22 from Lachnospira eligens (strain ATCC 27750 / DSM 3376 / VPI C15-48 / C15-B4) (Eubacterium eligens).